The chain runs to 171 residues: uncharacterized protein (171 aa).

An HTH marR-type domain is found at 33-166; the sequence is AISIATNLYR…LTGLLRKVAD (134 aa). Positions 80–103 form a DNA-binding region, H-T-H motif; it reads TRKIAELSGISTATASNVIKTLEK.

This is an uncharacterized protein from Bacillus subtilis (strain 168).